The primary structure comprises 403 residues: GTPase Obg (403 aa).

The Obg domain maps to 1-159 (MKFIDESLIR…RDLLLELMLL (159 aa)). Positions 160 to 333 (ADVGMLGFPN…LCRDIMDFII (174 aa)) constitute an OBG-type G domain. GTP contacts are provided by residues 166-173 (GFPNAGKS), 191-195 (FTTLV), 213-216 (DIPG), 283-286 (NKID), and 314-316 (SAA). Ser173 and Thr193 together coordinate Mg(2+). Residues 364–403 (YQFDDDEDWDDDWTEEDDDEDWDDDWSEEDDEGIEFIYKP) are disordered. The segment covering 365–397 (QFDDDEDWDDDWTEEDDDEDWDDDWSEEDDEGI) has biased composition (acidic residues).

Belongs to the TRAFAC class OBG-HflX-like GTPase superfamily. OBG GTPase family. In terms of assembly, monomer. Mg(2+) is required as a cofactor.

It localises to the cytoplasm. An essential GTPase which binds GTP, GDP and possibly (p)ppGpp with moderate affinity, with high nucleotide exchange rates and a fairly low GTP hydrolysis rate. Plays a role in control of the cell cycle, stress response, ribosome biogenesis and in those bacteria that undergo differentiation, in morphogenesis control. The protein is GTPase Obg of Haemophilus influenzae (strain PittGG).